The primary structure comprises 359 residues: MSVLDRLGQKLLFAFDPETAHGLSIAALRCGLPAGTRAVRDIRLKVSLCGLDFPNPLGMAAGYDKDAEVPDALLGLGFGFAEVGTVTPLPQAGNPKPRIFRLTADEAVINRLGFNNEGHAAAEKRLAARKGRPGIVGVNIGANKDSADRIGDYERGVGRFARHASYLTVNISSPNTPGLRNMQAREQLGELLSRVMAARASAATQPPIFLKIAPDLVEAELEDIAAEVVEKRIDGIIVSNTTISRPPLRSGDVGRETGGLSGKPLFERSTIVLAKMRKLLGPGIAIIGVGGVDSAETALEKIRAGADLVQLYTGMIYAGPALPGRIVAGMARFCETERLKSIGELRDSHLDRWASKPLS.

Residues 61 to 65 (AGYDK) and threonine 85 contribute to the FMN site. Lysine 65 lines the substrate pocket. Substrate is bound at residue 110 to 114 (NRLGF). Positions 139 and 170 each coordinate FMN. Asparagine 170 serves as a coordination point for substrate. Serine 173 (nucleophile) is an active-site residue. A substrate-binding site is contributed by asparagine 175. Positions 211 and 239 each coordinate FMN. Residue 240-241 (NT) coordinates substrate. FMN contacts are provided by residues glycine 262, glycine 291, and 312 to 313 (YT).

This sequence belongs to the dihydroorotate dehydrogenase family. Type 2 subfamily. In terms of assembly, monomer. FMN serves as cofactor.

The protein localises to the cell membrane. The enzyme catalyses (S)-dihydroorotate + a quinone = orotate + a quinol. It functions in the pathway pyrimidine metabolism; UMP biosynthesis via de novo pathway; orotate from (S)-dihydroorotate (quinone route): step 1/1. Catalyzes the conversion of dihydroorotate to orotate with quinone as electron acceptor. In Mesorhizobium japonicum (strain LMG 29417 / CECT 9101 / MAFF 303099) (Mesorhizobium loti (strain MAFF 303099)), this protein is Dihydroorotate dehydrogenase (quinone).